Reading from the N-terminus, the 334-residue chain is N-acetyl-gamma-glutamyl-phosphate reductase (334 aa).

Cys-154 is a catalytic residue.

Belongs to the NAGSA dehydrogenase family. Type 1 subfamily.

The protein resides in the cytoplasm. The enzyme catalyses N-acetyl-L-glutamate 5-semialdehyde + phosphate + NADP(+) = N-acetyl-L-glutamyl 5-phosphate + NADPH + H(+). It participates in amino-acid biosynthesis; L-arginine biosynthesis; N(2)-acetyl-L-ornithine from L-glutamate: step 3/4. In terms of biological role, catalyzes the NADPH-dependent reduction of N-acetyl-5-glutamyl phosphate to yield N-acetyl-L-glutamate 5-semialdehyde. In Aliivibrio fischeri (strain ATCC 700601 / ES114) (Vibrio fischeri), this protein is N-acetyl-gamma-glutamyl-phosphate reductase.